The primary structure comprises 246 residues: Small ribosomal subunit protein uS2 (246 aa).

The protein belongs to the universal ribosomal protein uS2 family.

The chain is Small ribosomal subunit protein uS2 from Pseudomonas aeruginosa (strain LESB58).